Reading from the N-terminus, the 451-residue chain is UDP-N-acetylmuramoylalanine--D-glutamate ligase (451 aa).

119-125 (GSNGKTT) is an ATP binding site.

It belongs to the MurCDEF family.

The protein resides in the cytoplasm. The enzyme catalyses UDP-N-acetyl-alpha-D-muramoyl-L-alanine + D-glutamate + ATP = UDP-N-acetyl-alpha-D-muramoyl-L-alanyl-D-glutamate + ADP + phosphate + H(+). The protein operates within cell wall biogenesis; peptidoglycan biosynthesis. Functionally, cell wall formation. Catalyzes the addition of glutamate to the nucleotide precursor UDP-N-acetylmuramoyl-L-alanine (UMA). This chain is UDP-N-acetylmuramoylalanine--D-glutamate ligase, found in Geobacillus sp. (strain WCH70).